We begin with the raw amino-acid sequence, 151 residues long: 1,4-dihydroxy-2-naphthoyl-CoA hydrolase (151 aa).

Aspartate 19 is a catalytic residue.

It belongs to the 4-hydroxybenzoyl-CoA thioesterase family. DHNA-CoA hydrolase subfamily.

It carries out the reaction 1,4-dihydroxy-2-naphthoyl-CoA + H2O = 1,4-dihydroxy-2-naphthoate + CoA + H(+). The protein operates within cofactor biosynthesis; phylloquinone biosynthesis. It participates in quinol/quinone metabolism; 1,4-dihydroxy-2-naphthoate biosynthesis; 1,4-dihydroxy-2-naphthoate from chorismate: step 7/7. Functionally, catalyzes the hydrolysis of 1,4-dihydroxy-2-naphthoyl-CoA (DHNA-CoA) to 1,4-dihydroxy-2-naphthoate (DHNA), a reaction involved in phylloquinone (vitamin K1) biosynthesis. This chain is 1,4-dihydroxy-2-naphthoyl-CoA hydrolase, found in Prochlorococcus marinus (strain MIT 9313).